We begin with the raw amino-acid sequence, 177 residues long: Protein ParB (177 aa).

A signal peptide spans 1 to 26; sequence MKRRSYAMLRAAAALAVLVVASPAWA. In terms of domain architecture, TNase-like spans 27-157; the sequence is ELRGEVVRII…RGKRVGLWSD (131 aa). Residues Arg-53, Glu-61, and Arg-95 contribute to the active site.

As to quaternary structure, monomer. Ca(2+) serves as cofactor. In terms of processing, the N-terminus is blocked.

It is found in the secreted. With respect to regulation, endonuclease activity is inhibited by EDTA. Involved in plasmid partition. An endonuclease that acts on supercoiled dsDNA, converting it first to open circular DNA and then linearizing it. Preferentially cleaves regions in dsDNA that are capable of forming ssDNA, such as AT-rich regions and sequences that can form cruciforms. Has poor endonucleolytic activity on linear DNA, has 5'-3' exonuclease activity on dsDNA cleaving generating 3'-phosphonucleotides. The protein is Protein ParB of Escherichia coli.